Here is a 466-residue protein sequence, read N- to C-terminus: Cysteine--tRNA ligase (466 aa).

Residue C28 coordinates Zn(2+). Residues 30–40 (PTVYNFFHIGN) carry the 'HIGH' region motif. Positions 208, 233, and 237 each coordinate Zn(2+). The short motif at 265-269 (KMSKS) is the 'KMSKS' region element. K268 provides a ligand contact to ATP.

The protein belongs to the class-I aminoacyl-tRNA synthetase family. In terms of assembly, monomer. Requires Zn(2+) as cofactor.

It localises to the cytoplasm. It catalyses the reaction tRNA(Cys) + L-cysteine + ATP = L-cysteinyl-tRNA(Cys) + AMP + diphosphate. In Clostridium perfringens (strain 13 / Type A), this protein is Cysteine--tRNA ligase.